The chain runs to 509 residues: Coiled-coil domain-containing protein 181 (509 aa).

Residues 46–82 (ENINQDLKENETVMEHTKRHSDPDKSLQDEVSPRRND) show a composition bias toward basic and acidic residues. 2 disordered regions span residues 46–120 (ENIN…EEED) and 241–367 (PINN…EEKE). Composition is skewed to polar residues over residues 243–266 (NNAN…SVSG) and 300–334 (TCPS…STYC). The stretch at 335–375 (LSPRQKELQKQLEEKREKLKREEERRKIEEEKEKKRENDIV) forms a coiled coil. The segment covering 338-367 (RQKELQKQLEEKREKLKREEERRKIEEEKE) has biased composition (basic and acidic residues).

Belongs to the CCDC181 family. Homodimer. Interacts with HOOK1. Interacts with HOOK2. Interacts with HOOK3.

The protein localises to the cytoplasm. It is found in the cytoskeleton. The protein resides in the cell projection. It localises to the cilium. Its subcellular location is the flagellum. In terms of biological role, microtubule-binding protein that localizes to the microtubular manchette of elongating spermatids. This is Coiled-coil domain-containing protein 181 from Homo sapiens (Human).